Consider the following 557-residue polypeptide: Vanadium-dependent bromoperoxidase (557 aa).

At Gln1 the chain carries Pyrrolidone carboxylic acid. The interval 1 to 22 (QTCSTSDDADDPTPPNERDDEA) is disordered. Cys77 and Cys86 are oxidised to a cystine. The vanadate site is built by Lys341 and Arg349. His411 is an active-site residue. Residues Ser416, Gly417, and His418 each contribute to the vanadate site. His418 is an active-site residue. The cysteines at positions 441 and 462 are disulfide-linked. Vanadate-binding residues include Arg480 and His486. Residues Cys544 and Cys555 are joined by a disulfide bond.

The protein belongs to the vanadium-dependent haloperoxidase family. In terms of assembly, homodimer; disulfide-linked. The cofactor is vanadate.

It catalyses the reaction RH + Br(-) + H2O2 = RBr + 2 H2O.. Its function is as follows. Catalyzes the halogenation of organic substrates in the presence of hydrogen peroxide. This Ascophyllum nodosum (Knotted wrack) protein is Vanadium-dependent bromoperoxidase.